The sequence spans 710 residues: FAST kinase domain-containing protein 2, mitochondrial (710 aa).

2 positions are modified to phosphoserine: Ser126 and Ser140. The 58-residue stretch at 634–691 (VAVLCVSRSAYCLGSSHPRGFLAMKMRHLNAMGFHVILVNNWEMDKLEMEDAVTFLKT) folds into the RAP domain. Ser708 carries the phosphoserine modification.

This sequence belongs to the FAST kinase family. As to quaternary structure, monomer. Found in a complex with GRSF1, DDX28, DHX30 and FASTKD5. Associates with the 16S mitochondrial rRNA (16S mt-rRNA). Forms a regulatory protein-RNA complex, consisting of RCC1L, NGRN, RPUSD3, RPUSD4, TRUB2, FASTKD2 and 16S mt-rRNA. In terms of tissue distribution, expression detected in spleen, thymus, testis, ovary, colon, heart, smooth muscle, kidney, brain, lung, liver and white adipose tissue with highest expression in heart, smooth muscle and thyroid.

The protein localises to the mitochondrion matrix. Its subcellular location is the mitochondrion nucleoid. Functionally, plays an important role in assembly of the mitochondrial large ribosomal subunit. As a component of a functional protein-RNA module, consisting of RCC1L, NGRN, RPUSD3, RPUSD4, TRUB2, FASTKD2 and 16S mitochondrial ribosomal RNA (16S mt-rRNA), controls 16S mt-rRNA abundance and is required for intra-mitochondrial translation. May play a role in mitochondrial apoptosis. The protein is FAST kinase domain-containing protein 2, mitochondrial of Homo sapiens (Human).